We begin with the raw amino-acid sequence, 83 residues long: METILGMTAIAVALLIGMGALGTAIGFGLLGGKFLEGAARQPEMAPMLQVKMFIVAGLLDAVTMIGVGIALFMLFTNPLGAML.

2 helical membrane-spanning segments follow: residues 10-30 (IAVA…FGLL) and 52-72 (MFIV…IALF).

The protein belongs to the ATPase C chain family. F-type ATPases have 2 components, F(1) - the catalytic core - and F(0) - the membrane proton channel. F(1) has five subunits: alpha(3), beta(3), gamma(1), delta(1), epsilon(1). F(0) has three main subunits: a(1), b(2) and c(10-14). The alpha and beta chains form an alternating ring which encloses part of the gamma chain. F(1) is attached to F(0) by a central stalk formed by the gamma and epsilon chains, while a peripheral stalk is formed by the delta and b chains.

It is found in the cell inner membrane. In terms of biological role, f(1)F(0) ATP synthase produces ATP from ADP in the presence of a proton or sodium gradient. F-type ATPases consist of two structural domains, F(1) containing the extramembraneous catalytic core and F(0) containing the membrane proton channel, linked together by a central stalk and a peripheral stalk. During catalysis, ATP synthesis in the catalytic domain of F(1) is coupled via a rotary mechanism of the central stalk subunits to proton translocation. Key component of the F(0) channel; it plays a direct role in translocation across the membrane. A homomeric c-ring of between 10-14 subunits forms the central stalk rotor element with the F(1) delta and epsilon subunits. The protein is ATP synthase subunit c of Shewanella baltica (strain OS223).